Reading from the N-terminus, the 533-residue chain is Protein mono-ADP-ribosyltransferase PARP3 (533 aa).

The segment at 1–30 (MAPKRKASVQTEGSKKRRQGTEEEDSFRST) is disordered. The residue at position 6 (Lys6) is an N6-(ADP-ribosyl)lysine. Glu12 is subject to ADP-ribosyl glutamic acid. Positions 14–18 (SKKRR) match the Nuclear localization signal motif. Glu24 and Glu32 each carry ADP-ribosyl glutamic acid. Positions 57 to 147 (GIQVHEDYDC…DRFVAQPNKY (91 aa)) constitute a WGR domain. Position 138 is an ADP-ribosyl aspartic acid (Asp138). 4 positions are modified to ADP-ribosyl glutamic acid: Glu160, Glu230, Glu309, and Glu310. The region spanning 181–299 (PCSLDPATQN…DIELAQTLQA (119 aa)) is the PARP alpha-helical domain. Residues 313 to 533 (HPLDRDYQLL…RLRYLLEIHL (221 aa)) enclose the PARP catalytic domain.

Belongs to the ARTD/PARP family. Interacts with PARP1; leading to activate PARP1 in absence of DNA. Interacts with PRKDC. Interacts with XRCC5/Ku80; the interaction is dependent on nucleic acids. Interacts with XRCC6/Ku70; the interaction is dependent on nucleic acids. Interacts with EZH2, HDAC1, HDAC2, SUZ12, YY1, LRIG3 and LIG4. Auto-ADP-ribosylated.

Its subcellular location is the nucleus. It localises to the chromosome. It is found in the cytoplasm. The protein localises to the cytoskeleton. The protein resides in the microtubule organizing center. Its subcellular location is the centrosome. It localises to the centriole. It carries out the reaction L-aspartyl-[protein] + NAD(+) = 4-O-(ADP-D-ribosyl)-L-aspartyl-[protein] + nicotinamide. The enzyme catalyses L-glutamyl-[protein] + NAD(+) = 5-O-(ADP-D-ribosyl)-L-glutamyl-[protein] + nicotinamide. It catalyses the reaction L-lysyl-[protein] + NAD(+) = N(6)-(ADP-D-ribosyl)-L-lysyl-[protein] + nicotinamide + H(+). Functionally, mono-ADP-ribosyltransferase that mediates mono-ADP-ribosylation of target proteins and plays a key role in the response to DNA damage. Mediates mono-ADP-ribosylation of glutamate, aspartate or lysine residues on target proteins. In contrast to PARP1 and PARP2, it is not able to mediate poly-ADP-ribosylation. Involved in DNA repair by mediating mono-ADP-ribosylation of a limited number of acceptor proteins involved in chromatin architecture and in DNA metabolism, such as histone H2B, XRCC5 and XRCC6. ADP-ribosylation follows DNA damage and appears as an obligatory step in a detection/signaling pathway leading to the reparation of DNA strand breaks. Involved in single-strand break repair by catalyzing mono-ADP-ribosylation of histone H2B on 'Glu-2' (H2BE2ADPr) of nucleosomes containing nicked DNA. Cooperates with the XRCC5-XRCC6 (Ku80-Ku70) heterodimer to limit end-resection thereby promoting accurate NHEJ. Suppresses G-quadruplex (G4) structures in response to DNA damage. Associates with a number of DNA repair factors and is involved in the response to exogenous and endogenous DNA strand breaks. Together with APLF, promotes the retention of the LIG4-XRCC4 complex on chromatin and accelerate DNA ligation during non-homologous end-joining (NHEJ). May link the DNA damage surveillance network to the mitotic fidelity checkpoint. Acts as a negative regulator of immunoglobulin class switch recombination, probably by controlling the level of AICDA /AID on the chromatin. In addition to proteins, also able to ADP-ribosylate DNA: mediates DNA mono-ADP-ribosylation of DNA strand break termini via covalent addition of a single ADP-ribose moiety to a 5'- or 3'-terminal phosphate residues in DNA containing multiple strand breaks. This chain is Protein mono-ADP-ribosyltransferase PARP3, found in Mus musculus (Mouse).